The following is a 207-amino-acid chain: Interleukin-6 (207 aa).

Positions 1–20 are cleaved as a signal peptide; it reads MNSLSTSAFSLGLLLVMATA. An intrachain disulfide couples Cys-67 to Cys-73. The residue at position 76 (Ser-76) is a Phosphoserine. Residues Cys-96 and Cys-106 are joined by a disulfide bond.

It belongs to the IL-6 superfamily. As to quaternary structure, component of a hexamer of two molecules each of IL6, IL6R and IL6ST; first binds to IL6R to associate with the signaling subunit IL6ST. Interacts with IL6R (via the N-terminal ectodomain); this interaction may be affected by IL6R-binding with SORL1, hence decreasing IL6 cis signaling. Interacts with SORL1 (via the N-terminal ectodomain); this interaction leads to IL6 internalization and lysosomal degradation. May form a trimeric complex with the soluble SORL1 ectodomain and soluble IL6R receptor; this interaction might stabilize circulating IL6, hence promoting IL6 trans signaling.

Its subcellular location is the secreted. In terms of biological role, cytokine with a wide variety of biological functions in immunity, tissue regeneration, and metabolism. Binds to IL6R, then the complex associates to the signaling subunit IL6ST/gp130 to trigger the intracellular IL6-signaling pathway. The interaction with the membrane-bound IL6R and IL6ST stimulates 'classic signaling', whereas the binding of IL6 and soluble IL6R to IL6ST stimulates 'trans-signaling'. Alternatively, 'cluster signaling' occurs when membrane-bound IL6:IL6R complexes on transmitter cells activate IL6ST receptors on neighboring receiver cells. Functionally, IL6 is a potent inducer of the acute phase response. Rapid production of IL6 contributes to host defense during infection and tissue injury, but excessive IL6 synthesis is involved in disease pathology. In the innate immune response, is synthesized by myeloid cells, such as macrophages and dendritic cells, upon recognition of pathogens through toll-like receptors (TLRs) at the site of infection or tissue injury. In the adaptive immune response, is required for the differentiation of B cells into immunoglobulin-secreting cells. Plays a major role in the differentiation of CD4(+) T cell subsets. Essential factor for the development of T follicular helper (Tfh) cells that are required for the induction of germinal-center formation. Required to drive naive CD4(+) T cells to the Th17 lineage. Also required for proliferation of myeloma cells and the survival of plasmablast cells. Acts as an essential factor in bone homeostasis and on vessels directly or indirectly by induction of VEGF, resulting in increased angiogenesis activity and vascular permeability. Induces, through 'trans-signaling' and synergistically with IL1B and TNF, the production of VEGF. Involved in metabolic controls, is discharged into the bloodstream after muscle contraction increasing lipolysis and improving insulin resistance. 'Trans-signaling' in central nervous system also regulates energy and glucose homeostasis. Mediates, through GLP-1, crosstalk between insulin-sensitive tissues, intestinal L cells and pancreatic islets to adapt to changes in insulin demand. Also acts as a myokine. Plays a protective role during liver injury, being required for maintenance of tissue regeneration. Also has a pivotal role in iron metabolism by regulating HAMP/hepcidin expression upon inflammation or bacterial infection. Through activation of IL6ST-YAP-NOTCH pathway, induces inflammation-induced epithelial regeneration. The protein is Interleukin-6 (IL6) of Vulpes vulpes (Red fox).